Reading from the N-terminus, the 352-residue chain is Homocitrate synthase, omega subunit (352 aa).

This sequence belongs to the alpha-IPM synthase/homocitrate synthase family. In terms of assembly, heterodimer of an alpha and an omega chain.

It catalyses the reaction acetyl-CoA + 2-oxoglutarate + H2O = (2R)-homocitrate + CoA + H(+). This protein is a Fe-Mo-cofactor biosynthetic component. The sequence is that of Homocitrate synthase, omega subunit (nifV-OMEGA) from Clostridium pasteurianum.